The sequence spans 1037 residues: Signal-induced proliferation-associated protein 1 (1037 aa).

A disordered region spans residues 1–85; sequence MWAGGVGSPR…ASRPAATPTR (85 aa). A Phosphothreonine modification is found at Thr62. Ser65, Ser178, Ser299, and Ser309 each carry phosphoserine. Residues 316–534 form the Rap-GAP domain; it reads LLTLDEQVLS…RTRQQYLQDL (219 aa). Residues 682 to 758 form the PDZ domain; that stretch reads ELALPRDGQG…VCVTVLPPDE (77 aa). Phosphoserine is present on residues Ser812 and Ser834. 2 disordered regions span residues 830–849 and 855–898; these read HNSL…LPNT and LVTT…ASIL. Over residues 871–881 the composition is skewed to low complexity; sequence PPSQDQSGSPS. Ser907 bears the Phosphoserine mark. The interval 943-969 is disordered; sequence REGQPISESGDPKEALKCDSEPEPGSL. Residues 952-962 show a composition bias toward basic and acidic residues; the sequence is GDPKEALKCDS. Positions 968 to 1025 form a coiled coil; that stretch reads SLSEKVSHLESMLWKLQEDLQREKADRAALEEEVRSLRHNNQRLLAESESAATRLLLA.

Interacts with RRP1B; the interaction leads to inhibition of SIPA1 GTPase activity. As to expression, preferentially expressed in both fetal and adult lymphohematopoietic tissues.

The protein localises to the nucleus. It localises to the cytoplasm. The protein resides in the perinuclear region. Its subcellular location is the endomembrane system. Functionally, GTPase activator for the nuclear Ras-related regulatory proteins Rap1, Rsr1 and Ran in vitro, converting them to the putatively inactive GDP-bound state. Affects cell cycle progression. The chain is Signal-induced proliferation-associated protein 1 (Sipa1) from Mus musculus (Mouse).